Consider the following 88-residue polypeptide: Small ribosomal subunit protein uS17 (88 aa).

The protein belongs to the universal ribosomal protein uS17 family. In terms of assembly, part of the 30S ribosomal subunit.

Functionally, one of the primary rRNA binding proteins, it binds specifically to the 5'-end of 16S ribosomal RNA. In Pseudomonas fluorescens (strain SBW25), this protein is Small ribosomal subunit protein uS17.